Here is a 665-residue protein sequence, read N- to C-terminus: Protein kinase domain-containing protein ppk2 (665 aa).

4 disordered regions span residues proline 42–phenylalanine 63, glycine 82–serine 152, leucine 187–asparagine 217, and alanine 286–proline 343. A compositionally biased stretch (polar residues) spans glycine 82 to tryptophan 104. 2 stretches are compositionally biased toward low complexity: residues serine 137–serine 152 and threonine 206–asparagine 217. Polar residues predominate over residues serine 294–valine 316. Serine 358 is subject to Phosphoserine. Positions tyrosine 388–leucine 637 constitute a Protein kinase domain. Residues isoleucine 394–threonine 402 and lysine 417 contribute to the ATP site.

The protein localises to the cytoplasm. The chain is Protein kinase domain-containing protein ppk2 (ppk2) from Schizosaccharomyces pombe (strain 972 / ATCC 24843) (Fission yeast).